Reading from the N-terminus, the 218-residue chain is MFWSKKPLDLPTPETALKGRPDAIPTARLHHVNQNPLKGPYPDGFRTAIFALGCFWGAERAFWRTPGVWVTAVGYLAGLTPNPTYEEVCSGRTGHTEGVLVVYDPAVISYADLVKLFFESHDPTQGMRQGNDVGTQYRSGIYTSDPQEKAVAEAVKASYEAALKAKGFGPITTEIIDGGPFYFAEDYHQQYLSKNPGGYCGLGGTGVSCPIGVGVAAQ.

C54 is a catalytic residue.

Belongs to the MsrA Met sulfoxide reductase family.

It catalyses the reaction L-methionyl-[protein] + [thioredoxin]-disulfide + H2O = L-methionyl-(S)-S-oxide-[protein] + [thioredoxin]-dithiol. It carries out the reaction [thioredoxin]-disulfide + L-methionine + H2O = L-methionine (S)-S-oxide + [thioredoxin]-dithiol. Functionally, has an important function as a repair enzyme for proteins that have been inactivated by oxidation. Catalyzes the reversible oxidation-reduction of methionine sulfoxide in proteins to methionine. The sequence is that of Peptide methionine sulfoxide reductase MsrA from Azorhizobium caulinodans (strain ATCC 43989 / DSM 5975 / JCM 20966 / LMG 6465 / NBRC 14845 / NCIMB 13405 / ORS 571).